The chain runs to 333 residues: 4-hydroxy-3-methylbut-2-enyl diphosphate reductase (333 aa).

Residue C34 coordinates [4Fe-4S] cluster. 2 residues coordinate (2E)-4-hydroxy-3-methylbut-2-enyl diphosphate: H63 and H96. Residues H63 and H96 each contribute to the dimethylallyl diphosphate site. H63 and H96 together coordinate isopentenyl diphosphate. Position 118 (C118) interacts with [4Fe-4S] cluster. H146 provides a ligand contact to (2E)-4-hydroxy-3-methylbut-2-enyl diphosphate. Position 146 (H146) interacts with dimethylallyl diphosphate. H146 serves as a coordination point for isopentenyl diphosphate. E148 acts as the Proton donor in catalysis. A (2E)-4-hydroxy-3-methylbut-2-enyl diphosphate-binding site is contributed by T186. Position 216 (C216) interacts with [4Fe-4S] cluster. Residues S244, S245, N246, and S289 each coordinate (2E)-4-hydroxy-3-methylbut-2-enyl diphosphate. The dimethylallyl diphosphate site is built by S244, S245, N246, and S289. Positions 244, 245, 246, and 289 each coordinate isopentenyl diphosphate.

The protein belongs to the IspH family. [4Fe-4S] cluster is required as a cofactor.

The catalysed reaction is isopentenyl diphosphate + 2 oxidized [2Fe-2S]-[ferredoxin] + H2O = (2E)-4-hydroxy-3-methylbut-2-enyl diphosphate + 2 reduced [2Fe-2S]-[ferredoxin] + 2 H(+). The enzyme catalyses dimethylallyl diphosphate + 2 oxidized [2Fe-2S]-[ferredoxin] + H2O = (2E)-4-hydroxy-3-methylbut-2-enyl diphosphate + 2 reduced [2Fe-2S]-[ferredoxin] + 2 H(+). Its pathway is isoprenoid biosynthesis; dimethylallyl diphosphate biosynthesis; dimethylallyl diphosphate from (2E)-4-hydroxy-3-methylbutenyl diphosphate: step 1/1. It functions in the pathway isoprenoid biosynthesis; isopentenyl diphosphate biosynthesis via DXP pathway; isopentenyl diphosphate from 1-deoxy-D-xylulose 5-phosphate: step 6/6. Its function is as follows. Catalyzes the conversion of 1-hydroxy-2-methyl-2-(E)-butenyl 4-diphosphate (HMBPP) into a mixture of isopentenyl diphosphate (IPP) and dimethylallyl diphosphate (DMAPP). Acts in the terminal step of the DOXP/MEP pathway for isoprenoid precursor biosynthesis. The polypeptide is 4-hydroxy-3-methylbut-2-enyl diphosphate reductase (Mycobacterium sp. (strain KMS)).